The primary structure comprises 243 residues: Small ribosomal subunit protein uS2 (243 aa).

The protein belongs to the universal ribosomal protein uS2 family.

The protein is Small ribosomal subunit protein uS2 of Aliivibrio salmonicida (strain LFI1238) (Vibrio salmonicida (strain LFI1238)).